Reading from the N-terminus, the 100-residue chain is uncharacterized protein (100 aa).

Residues 65 to 96 (PELSKNWEKLKKEIEQKHKEIQELISEFDNMF) adopt a coiled-coil conformation.

This is an uncharacterized protein from Acidianus filamentous virus 2 (isolate Italy/Pozzuoli) (AFV-2).